A 75-amino-acid polypeptide reads, in one-letter code: Conotoxin VnMKLT2-012 (75 aa).

Residues M1–A23 form the signal peptide. Residues E24–R45 constitute a propeptide that is removed on maturation. The span at A31–R45 shows a compositional bias: basic and acidic residues. The tract at residues A31–S50 is disordered. 3 cysteine pairs are disulfide-bonded: C47–C60, C54–C65, and C59–C74.

This sequence belongs to the conotoxin O1 superfamily. As to expression, expressed by the venom duct.

It localises to the secreted. This chain is Conotoxin VnMKLT2-012, found in Conus ventricosus (Mediterranean cone).